The primary structure comprises 60 residues: Large ribosomal subunit protein uL30 (60 aa).

Belongs to the universal ribosomal protein uL30 family. As to quaternary structure, part of the 50S ribosomal subunit.

The sequence is that of Large ribosomal subunit protein uL30 from Alcanivorax borkumensis (strain ATCC 700651 / DSM 11573 / NCIMB 13689 / SK2).